An 872-amino-acid polypeptide reads, in one-letter code: Valine--tRNA ligase (872 aa).

The short motif at Pro-46 to His-56 is the 'HIGH' region element. The short motif at Lys-523–Ser-527 is the 'KMSKS' region element. Lys-526 serves as a coordination point for ATP. Positions Ile-796 to Asp-872 form a coiled coil.

The protein belongs to the class-I aminoacyl-tRNA synthetase family. ValS type 1 subfamily. Monomer.

It is found in the cytoplasm. The catalysed reaction is tRNA(Val) + L-valine + ATP = L-valyl-tRNA(Val) + AMP + diphosphate. Its function is as follows. Catalyzes the attachment of valine to tRNA(Val). As ValRS can inadvertently accommodate and process structurally similar amino acids such as threonine, to avoid such errors, it has a 'posttransfer' editing activity that hydrolyzes mischarged Thr-tRNA(Val) in a tRNA-dependent manner. This Mycoplasma mycoides subsp. mycoides SC (strain CCUG 32753 / NCTC 10114 / PG1) protein is Valine--tRNA ligase.